Consider the following 329-residue polypeptide: 4-hydroxythreonine-4-phosphate dehydrogenase (329 aa).

2 residues coordinate substrate: H136 and T137. A divalent metal cation is bound by residues H166, H211, and H266. Residues K274, N283, and R292 each contribute to the substrate site.

It belongs to the PdxA family. In terms of assembly, homodimer. Requires Zn(2+) as cofactor. Mg(2+) is required as a cofactor. It depends on Co(2+) as a cofactor.

The protein resides in the cytoplasm. The catalysed reaction is 4-(phosphooxy)-L-threonine + NAD(+) = 3-amino-2-oxopropyl phosphate + CO2 + NADH. It functions in the pathway cofactor biosynthesis; pyridoxine 5'-phosphate biosynthesis; pyridoxine 5'-phosphate from D-erythrose 4-phosphate: step 4/5. In terms of biological role, catalyzes the NAD(P)-dependent oxidation of 4-(phosphooxy)-L-threonine (HTP) into 2-amino-3-oxo-4-(phosphooxy)butyric acid which spontaneously decarboxylates to form 3-amino-2-oxopropyl phosphate (AHAP). This chain is 4-hydroxythreonine-4-phosphate dehydrogenase, found in Neisseria meningitidis serogroup B (strain ATCC BAA-335 / MC58).